The sequence spans 450 residues: FAD-dependent monooxygenase okaB (450 aa).

The chain crosses the membrane as a helical span at residues 14 to 34 (IVIIIVGLGIAGLSAAIECHG). E43 and R116 together coordinate FAD. R194 is a catalytic residue. FAD is bound by residues D318 and G331.

It belongs to the paxM FAD-dependent monooxygenase family.

Its subcellular location is the membrane. The enzyme catalyses cyclo(N(8)-(alpha,alpha-dimethylallyl)-L-Trp-6a-(alpha,alpha-dimethylallyl)-L-Trp) + AH2 + O2 = okaramine C + A + H2O. The protein operates within alkaloid biosynthesis. FAD-dependent monooxygenase; part of the gene cluster that mediates the biosynthesis of okaramine B, a prenylated indole alkaloid that possesses an unusual octacyclic ring system, including a four-membered azetidine ring and an eight-membered azocine ring, and that exhibits insecticidal activity against silkworm larvae. Within the pathway, okaC performs indole 2,3-epoxidation, facilitating the formation of the hexahydropyrrolo[2,3-b]indole (HPI) moiety of okaramine C. okaC then performs asymmetric reverse prenylation of cyclo(L-Trp-L-Trp) at N-1 and C-2' of the indole ring to produce the cyclic prenylated tryptophan dimer cyclo(N8-(alpha,alpha-dimethylallyl)-L-Trp-6a-(alpha,alpha-dime-thylallyl)-L-Trp). The biosynthesis begins with the NRPS okaA that condenses two tryptophan molecules into cyclo(L-Trp-L-Trp). Prenylation by the prenyltransferase okaC then leads to the formation of cyclo(N8-(alpha,alpha-dimethylallyl)-L-Trp-6a-(alpha,alpha-dime-thylallyl)-L-Trp). This is followed by indole 2,3-epoxidation by the FAD-dependent monooxygenase okaB to facilitate the formation of the hexahydropyrrolo[2,3-b]indole (HPI) moiety of okaramine C. The cytochrome P450 monooxygenase okaD then likely catalyzes formation of the eight-membered ring of okaramine A. The dioxygenase okaE further forms the unusual 2-dimethyl-3-methyl-azetidine ring to yield 12-deshydroxyl okaramine E, as well as the hydroxylation of 12-deshydroxyl okaramine E to produce okaramine E. The cytochrome P450 monoxygenase okaG converts 12-deshydroxyl okaramine E into 3-desmethyl okaramine B which is further methylated by the methyltransferase okaF into okaramine B. In a shunt pathway, okaG and okaF together are also able to convert okaramine E into okaramine D. Okaramine H is produced by nonenzymatic conversion from okaramine A. This is FAD-dependent monooxygenase okaB from Penicillium ochrochloron.